Reading from the N-terminus, the 363-residue chain is Aminomethyltransferase (363 aa).

Belongs to the GcvT family. As to quaternary structure, the glycine cleavage system is composed of four proteins: P, T, L and H.

The catalysed reaction is N(6)-[(R)-S(8)-aminomethyldihydrolipoyl]-L-lysyl-[protein] + (6S)-5,6,7,8-tetrahydrofolate = N(6)-[(R)-dihydrolipoyl]-L-lysyl-[protein] + (6R)-5,10-methylene-5,6,7,8-tetrahydrofolate + NH4(+). The glycine cleavage system catalyzes the degradation of glycine. In Staphylococcus aureus (strain MRSA252), this protein is Aminomethyltransferase.